The primary structure comprises 275 residues: Tryptophan synthase alpha chain (275 aa).

Residues E49 and D60 each act as proton acceptor in the active site.

Belongs to the TrpA family. In terms of assembly, tetramer of two alpha and two beta chains.

It carries out the reaction (1S,2R)-1-C-(indol-3-yl)glycerol 3-phosphate + L-serine = D-glyceraldehyde 3-phosphate + L-tryptophan + H2O. It functions in the pathway amino-acid biosynthesis; L-tryptophan biosynthesis; L-tryptophan from chorismate: step 5/5. Its function is as follows. The alpha subunit is responsible for the aldol cleavage of indoleglycerol phosphate to indole and glyceraldehyde 3-phosphate. The chain is Tryptophan synthase alpha chain from Nitrosomonas europaea (strain ATCC 19718 / CIP 103999 / KCTC 2705 / NBRC 14298).